Here is a 1016-residue protein sequence, read N- to C-terminus: Probable outer membrane protein PmpH (1016 aa).

Residues 1 to 24 (MPFSLRSTSFCFLACLCSYSYGFA) form the signal peptide. The region spanning 697–1016 (GELVPNSLWV…FVSMGLNRIF (320 aa)) is the Autotransporter domain.

Belongs to the PMP outer membrane protein family.

Its subcellular location is the secreted. It localises to the cell wall. The protein localises to the cell outer membrane. This Chlamydia trachomatis serovar D (strain ATCC VR-885 / DSM 19411 / UW-3/Cx) protein is Probable outer membrane protein PmpH (pmpH).